The primary structure comprises 69 residues: Antimicrobial peptide Eval36 (69 aa).

The N-terminal stretch at 1 to 23 is a signal peptide; that stretch reads MKAQFAILVISMMLLQLIVQTES. L37 carries the leucine amide modification. A propeptide spanning residues 38–69 is cleaved from the precursor; that stretch reads GKRGLRNLDDFQDFLDSDTSDADLRMLRDMFR.

The protein belongs to the non-disulfide-bridged peptide (NDBP) superfamily. Short antimicrobial peptide (group 4) family. Expressed by the venom gland.

It localises to the secreted. In terms of biological role, probable antimicrobial peptide. Shows low inhibitory activity against herpes simplex virus type 1 (HSV-1). The sequence is that of Antimicrobial peptide Eval36 from Euscorpiops validus (Scorpion).